The primary structure comprises 178 residues: Vegetative protein (178 aa).

Disordered regions lie at residues 67–102 and 138–158; these read AGRRGPGRPPAARSAVTAAPAAVGGKRRGRKPAAAG and NRRPSDWKDYADPDSVDDIKL. Residues 76 to 90 show a composition bias toward low complexity; it reads PAARSAVTAAPAAVG.

The chain is Vegetative protein (vegA) from Myxococcus xanthus.